We begin with the raw amino-acid sequence, 179 residues long: Large ribosomal subunit protein uL5 (179 aa).

Belongs to the universal ribosomal protein uL5 family. Part of the 50S ribosomal subunit; part of the 5S rRNA/L5/L18/L25 subcomplex. Contacts the 5S rRNA and the P site tRNA. Forms a bridge to the 30S subunit in the 70S ribosome.

Its function is as follows. This is one of the proteins that bind and probably mediate the attachment of the 5S RNA into the large ribosomal subunit, where it forms part of the central protuberance. In the 70S ribosome it contacts protein S13 of the 30S subunit (bridge B1b), connecting the 2 subunits; this bridge is implicated in subunit movement. Contacts the P site tRNA; the 5S rRNA and some of its associated proteins might help stabilize positioning of ribosome-bound tRNAs. The polypeptide is Large ribosomal subunit protein uL5 (Geobacter sulfurreducens (strain ATCC 51573 / DSM 12127 / PCA)).